Consider the following 208-residue polypeptide: Uridine kinase (208 aa).

Gly-12 to Thr-19 is an ATP binding site.

It belongs to the uridine kinase family.

Its subcellular location is the cytoplasm. The catalysed reaction is uridine + ATP = UMP + ADP + H(+). It catalyses the reaction cytidine + ATP = CMP + ADP + H(+). The protein operates within pyrimidine metabolism; CTP biosynthesis via salvage pathway; CTP from cytidine: step 1/3. Its pathway is pyrimidine metabolism; UMP biosynthesis via salvage pathway; UMP from uridine: step 1/1. The sequence is that of Uridine kinase from Streptococcus equi subsp. equi (strain 4047).